A 382-amino-acid chain; its full sequence is Dual-specificity RNA methyltransferase RlmN (382 aa).

Residue Glu95 is the Proton acceptor of the active site. The Radical SAM core domain maps to 101 to 349 (EETRGTLCVS…TTVRKTRGDD (249 aa)). Cys108 and Cys354 are disulfide-bonded. [4Fe-4S] cluster contacts are provided by Cys115, Cys119, and Cys122. Residues 180-181 (GE), Ser212, 234-236 (SLH), and Asn311 contribute to the S-adenosyl-L-methionine site. The S-methylcysteine intermediate role is filled by Cys354.

It belongs to the radical SAM superfamily. RlmN family. [4Fe-4S] cluster serves as cofactor.

Its subcellular location is the cytoplasm. It carries out the reaction adenosine(2503) in 23S rRNA + 2 reduced [2Fe-2S]-[ferredoxin] + 2 S-adenosyl-L-methionine = 2-methyladenosine(2503) in 23S rRNA + 5'-deoxyadenosine + L-methionine + 2 oxidized [2Fe-2S]-[ferredoxin] + S-adenosyl-L-homocysteine. The enzyme catalyses adenosine(37) in tRNA + 2 reduced [2Fe-2S]-[ferredoxin] + 2 S-adenosyl-L-methionine = 2-methyladenosine(37) in tRNA + 5'-deoxyadenosine + L-methionine + 2 oxidized [2Fe-2S]-[ferredoxin] + S-adenosyl-L-homocysteine. Specifically methylates position 2 of adenine 2503 in 23S rRNA and position 2 of adenine 37 in tRNAs. m2A2503 modification seems to play a crucial role in the proofreading step occurring at the peptidyl transferase center and thus would serve to optimize ribosomal fidelity. The chain is Dual-specificity RNA methyltransferase RlmN from Paraburkholderia phymatum (strain DSM 17167 / CIP 108236 / LMG 21445 / STM815) (Burkholderia phymatum).